Reading from the N-terminus, the 1764-residue chain is Nucleolar pre-ribosomal-associated protein 1 (1764 aa).

The tract at residues 1 to 23 (MSNHSEAYGSRDQRREKYTQGKE) is disordered. A compositionally biased stretch (basic and acidic residues) spans 9–23 (GSRDQRREKYTQGKE).

Associates with pre-60S ribosomal particles. Predominantly associated with the 27SA2 pre-rRNA. Can associate with a subset of box H/ACA and box C/D small nucleolar RNPs (snoRNPs) required for peptidyl transferase center modification and with small RNAs snR37 and snR42. Interacts with URB2. Together with DBP6, NOP8, URB2 and RSA3, forms an RNA-independent complex, which is required during early maturation of nascent 60S ribosomal subunits.

It localises to the nucleus. Its subcellular location is the nucleolus. Required for 60S ribosomal subunit formation and pre-rRNA processing. Required for normal accumulation of 25S and 5.8S rRNAs. The sequence is that of Nucleolar pre-ribosomal-associated protein 1 (URB1) from Saccharomyces cerevisiae (strain ATCC 204508 / S288c) (Baker's yeast).